The following is a 546-amino-acid chain: Probable Xaa-Pro aminopeptidase pepP (546 aa).

Mn(2+)-binding residues include Asp341, Asp352, Glu475, and Glu515.

This sequence belongs to the peptidase M24B family. Mn(2+) serves as cofactor.

The enzyme catalyses Release of any N-terminal amino acid, including proline, that is linked to proline, even from a dipeptide or tripeptide.. Functionally, catalyzes the removal of a penultimate prolyl residue from the N-termini of peptides. The protein is Probable Xaa-Pro aminopeptidase pepP (pepP) of Sclerotinia sclerotiorum (strain ATCC 18683 / 1980 / Ss-1) (White mold).